A 700-amino-acid chain; its full sequence is Elongation factor G 2 (700 aa).

The tr-type G domain occupies 8–290 (ERYRNIGISA…AVIDFLPSPV (283 aa)). Residues 17–24 (AHIDAGKT), 88–92 (DTPGH), and 142–145 (NKMD) each bind GTP.

It belongs to the TRAFAC class translation factor GTPase superfamily. Classic translation factor GTPase family. EF-G/EF-2 subfamily.

It localises to the cytoplasm. Catalyzes the GTP-dependent ribosomal translocation step during translation elongation. During this step, the ribosome changes from the pre-translocational (PRE) to the post-translocational (POST) state as the newly formed A-site-bound peptidyl-tRNA and P-site-bound deacylated tRNA move to the P and E sites, respectively. Catalyzes the coordinated movement of the two tRNA molecules, the mRNA and conformational changes in the ribosome. This is Elongation factor G 2 from Burkholderia orbicola (strain AU 1054).